Consider the following 210-residue polypeptide: Na(+)-translocating NADH-quinone reductase subunit D (210 aa).

Helical transmembrane passes span 42-62 (VVMT…ISTI), 66-86 (IPNS…VIVV), 103-123 (VYVG…AFAM), 131-151 (FMDG…VGAF), 154-174 (LFGS…NGGW), and 178-198 (NGLL…IWAV).

The protein belongs to the NqrDE/RnfAE family. As to quaternary structure, composed of six subunits; NqrA, NqrB, NqrC, NqrD, NqrE and NqrF.

It is found in the cell inner membrane. It catalyses the reaction a ubiquinone + n Na(+)(in) + NADH + H(+) = a ubiquinol + n Na(+)(out) + NAD(+). NQR complex catalyzes the reduction of ubiquinone-1 to ubiquinol by two successive reactions, coupled with the transport of Na(+) ions from the cytoplasm to the periplasm. NqrA to NqrE are probably involved in the second step, the conversion of ubisemiquinone to ubiquinol. The sequence is that of Na(+)-translocating NADH-quinone reductase subunit D from Psychromonas ingrahamii (strain DSM 17664 / CCUG 51855 / 37).